The sequence spans 260 residues: BTB/POZ domain-containing protein KCTD21 (260 aa).

The BTB domain maps to 3-72; that stretch reads DPITLNVGGK…LRTSHLDLPE (70 aa). A coiled-coil region spans residues 88 to 112; that stretch reads QVQPLIEALQEKEVELSKAEKNAML.

In terms of assembly, homopentamer. Interacts with KCTD11; KCTD21 and KCTD11 may associate in pentameric assemblies. Interacts (via BTB domain) with CUL3; indicative for a participation in a BCR (BTB-CUL3-RBX1) E3 ubiquitin-protein ligase complex. As to expression, highly expressed in cerebellum and brain. Expression is down-regulated in medulloblastoma.

Its pathway is protein modification; protein ubiquitination. Functionally, probable substrate-specific adapter of a BCR (BTB-CUL3-RBX1) E3 ubiquitin-protein ligase complex mediating the ubiquitination and subsequent proteasomal degradation of target proteins. Promotes the ubiquitination of HDAC1. Can function as antagonist of the Hedgehog pathway by affecting the nuclear transfer of transcription factor GLI1; the function probably occurs via HDAC1 down-regulation, keeping GLI1 acetylated and inactive. Inhibits cell growth and tumorigenicity of medulloblastoma (MDB). This Homo sapiens (Human) protein is BTB/POZ domain-containing protein KCTD21 (KCTD21).